Here is a 478-residue protein sequence, read N- to C-terminus: Proline--tRNA ligase (478 aa).

Belongs to the class-II aminoacyl-tRNA synthetase family. ProS type 3 subfamily. Homodimer.

The protein localises to the cytoplasm. It carries out the reaction tRNA(Pro) + L-proline + ATP = L-prolyl-tRNA(Pro) + AMP + diphosphate. In terms of biological role, catalyzes the attachment of proline to tRNA(Pro) in a two-step reaction: proline is first activated by ATP to form Pro-AMP and then transferred to the acceptor end of tRNA(Pro). The sequence is that of Proline--tRNA ligase from Clostridium botulinum (strain Langeland / NCTC 10281 / Type F).